A 148-amino-acid chain; its full sequence is Angiogenin-1 (148 aa).

The first 23 residues, 1–23, serve as a signal peptide directing secretion; the sequence is MVMVLSPLLLVFILGLGLTPVAP. The active-site Proton acceptor is H37. R45 contacts tRNA. 3 disulfides stabilise this stretch: C50–C105, C63–C116, and C81–C131. The Nucleolar localization signal motif lies at 55–59; the sequence is KNRRL. TRNA-binding residues include C105 and I127. H138 serves as the catalytic Proton donor.

This sequence belongs to the pancreatic ribonuclease family. Homodimer. Interacts with RNH1; inhibiting ANG ribonuclease activity. Serum and milk.

It is found in the secreted. It localises to the nucleus. The protein localises to the nucleolus. The protein resides in the cytoplasm. Its subcellular location is the stress granule. Its function is as follows. Secreted ribonuclease that can either promote or restrict cell proliferation of target cells, depending on the context. Endocytosed in target cells via its receptor PLXNB2 and translocates to the cytoplasm or nucleus. Under stress conditions, localizes to the cytoplasm and promotes the assembly of stress granules (SGs): specifically cleaves a subset of tRNAs within anticodon loops to produce tRNA-derived stress-induced fragments (tiRNAs), resulting in translation repression and inhibition of cell proliferation. tiRNas also prevent formation of apoptosome, thereby promoting cell survival. Preferentially cleaves RNAs between a pyrimidine and an adenosine residue, suggesting that it cleaves the anticodon loop of tRNA(Ala) (32-UUAGCAU-38) after positions 33 and 36. Cleaves a subset of tRNAs, including tRNA(Ala), tRNA(Glu), tRNA(Gly), tRNA(Lys), tRNA(Val), tRNA(His), tRNA(Asp) and tRNA(Sec). Under growth conditions and in differentiated cells, translocates to the nucleus and stimulates ribosomal RNA (rRNA) transcription, including that containing the initiation site sequences of 45S rRNA, thereby promoting cell growth and proliferation. Angiogenin induces vascularization of normal and malignant tissues via its ability to promote rRNA transcription. The protein is Angiogenin-1 (ANG1) of Bos taurus (Bovine).